The chain runs to 294 residues: tRNA dimethylallyltransferase (294 aa).

10–17 contacts ATP; sequence GPTAVGKT. 12 to 17 lines the substrate pocket; it reads TAVGKT. Residues 35-38 are interaction with substrate tRNA; it reads DSQQ.

This sequence belongs to the IPP transferase family. In terms of assembly, monomer. The cofactor is Mg(2+).

The enzyme catalyses adenosine(37) in tRNA + dimethylallyl diphosphate = N(6)-dimethylallyladenosine(37) in tRNA + diphosphate. Its function is as follows. Catalyzes the transfer of a dimethylallyl group onto the adenine at position 37 in tRNAs that read codons beginning with uridine, leading to the formation of N6-(dimethylallyl)adenosine (i(6)A). The sequence is that of tRNA dimethylallyltransferase from Streptococcus pneumoniae serotype 4 (strain ATCC BAA-334 / TIGR4).